The following is an 820-amino-acid chain: Trimethylamine-N-oxide reductase (820 aa).

The segment at residues 1-33 (MAITRRSFLKGVATTSAASVIGPSLLASASANA) is a signal peptide (tat-type signal). Ser-179 is a binding site for Mo-bis(molybdopterin guanine dinucleotide).

It belongs to the prokaryotic molybdopterin-containing oxidoreductase family. Requires Mo-bis(molybdopterin guanine dinucleotide) as cofactor. In terms of processing, predicted to be exported by the Tat system. The position of the signal peptide cleavage has not been experimentally proven.

The protein localises to the periplasm. The catalysed reaction is trimethylamine + 2 Fe(III)-[cytochrome c] + H2O = trimethylamine N-oxide + 2 Fe(II)-[cytochrome c] + 3 H(+). Reduces trimethylamine-N-oxide (TMAO) into trimethylamine; an anaerobic reaction coupled to energy-yielding reactions. This is Trimethylamine-N-oxide reductase (torA) from Vibrio vulnificus (strain CMCP6).